A 423-amino-acid chain; its full sequence is Glucose-1-phosphate adenylyltransferase (423 aa).

Residues tyrosine 108, glycine 173, 188–189, and serine 207 contribute to the alpha-D-glucose 1-phosphate site; that span reads EK.

Belongs to the bacterial/plant glucose-1-phosphate adenylyltransferase family. In terms of assembly, homotetramer.

The catalysed reaction is alpha-D-glucose 1-phosphate + ATP + H(+) = ADP-alpha-D-glucose + diphosphate. It participates in glycan biosynthesis; glycogen biosynthesis. Its function is as follows. Involved in the biosynthesis of ADP-glucose, a building block required for the elongation reactions to produce glycogen. Catalyzes the reaction between ATP and alpha-D-glucose 1-phosphate (G1P) to produce pyrophosphate and ADP-Glc. The polypeptide is Glucose-1-phosphate adenylyltransferase (Francisella tularensis subsp. holarctica (strain FTNF002-00 / FTA)).